The sequence spans 392 residues: Lysine acetyltransferase (392 aa).

The catalysed reaction is L-lysine + acetyl-CoA = N(6)-acetyl-L-lysine + CoA + H(+). The protein operates within amino-acid degradation; L-lysine degradation via acetylation pathway; glutarate from L-lysine: step 1/6. Its activity is regulated as follows. Activity is inhibited by 5-aminovalerate. Functionally, lysine N-6-acetyl transferase (LAT) that catalyzes the first step of the lysine degradation pathway. This chain is Lysine acetyltransferase, found in Yarrowia lipolytica (strain CLIB 122 / E 150) (Yeast).